The primary structure comprises 139 residues: Endoribonuclease YbeY (139 aa).

Residues H99, H103, and H109 each coordinate Zn(2+).

Belongs to the endoribonuclease YbeY family. Zn(2+) serves as cofactor.

The protein localises to the cytoplasm. Functionally, single strand-specific metallo-endoribonuclease involved in late-stage 70S ribosome quality control and in maturation of the 3' terminus of the 16S rRNA. This is Endoribonuclease YbeY from Nautilia profundicola (strain ATCC BAA-1463 / DSM 18972 / AmH).